The following is a 291-amino-acid chain: Urease accessory protein UreD (291 aa).

Belongs to the UreD family. UreD, UreF and UreG form a complex that acts as a GTP-hydrolysis-dependent molecular chaperone, activating the urease apoprotein by helping to assemble the nickel containing metallocenter of UreC. The UreE protein probably delivers the nickel.

The protein localises to the cytoplasm. In terms of biological role, required for maturation of urease via the functional incorporation of the urease nickel metallocenter. The sequence is that of Urease accessory protein UreD from Acinetobacter baumannii (strain SDF).